Here is a 618-residue protein sequence, read N- to C-terminus: Baculoviral IAP repeat-containing protein 2 (618 aa).

3 BIR repeats span residues 46–113 (ELYR…CSFI), 184–250 (EEAR…CPFL), and 269–336 (HAAR…CEFL). The Zn(2+) site is built by Cys306, Cys309, His326, and Cys333. The CARD domain maps to 453–543 (MASDDLSLIR…TLYKNLFVDK (91 aa)). The RING-type zinc-finger motif lies at 571–606 (CKVCMDKEVSVVFIPCGHLVVCQECAPSLRKCPICR).

It belongs to the IAP family. In terms of assembly, interacts with DIABLO/SMAC and with PRSS25; these interactions inhibit apoptotic suppressor activity. Interacts with CASP9. Interacts (via BIR domains) with TRAF2; the interaction is required for IKBKE ubiquitination. Interacts with E2F1, RIPK1, RIPK2, RIPK3, RIPK4, BIRC5/survivin and USP19. HSP90AB1. Interacts with UBXN1. Interacts with GSK3B. Interacts with several death receptors, inclusing FAS, TNFRSF10A and TNFRSF10B. Recruited to TNFRSF10B in the absence of receptor stimulation. When TNFRSF10B is stimulated, further recruited to the receptor and cleaved by caspases. Proteolytic fragments remain associated with TNFRSF10B. In terms of processing, auto-ubiquitinated and degraded by the proteasome in apoptotic cells. Upon stimulation of death receptors, including TNFRSF10B, recruited to receptors and cleaved by caspases. Proteolytic fragments remain associated with the receptors. This cleavage presumably inactivates the protein. In terms of tissue distribution, present in many fetal and adult tissues. Mainly expressed in adult skeletal muscle, thymus, testis, ovary, and pancreas, low or absent in brain and peripheral blood leukocytes.

The protein resides in the cytoplasm. It localises to the nucleus. It carries out the reaction S-ubiquitinyl-[E2 ubiquitin-conjugating enzyme]-L-cysteine + [acceptor protein]-L-lysine = [E2 ubiquitin-conjugating enzyme]-L-cysteine + N(6)-ubiquitinyl-[acceptor protein]-L-lysine.. With respect to regulation, the CARD domain inhibits the activation of E3 ubiquitin ligase activity by preventing RING domain dimerization and E2 ubiquitin donor binding and activation. The CARD domain-mediated autoinhibition of the E3 ubiquitin-protein ligase activity suppresses cell proliferation and migration. USP19 regulates the stability of BIRC2/c-IAP1 by preventing its ubiquitination. Functionally, multi-functional protein which regulates not only caspases and apoptosis, but also modulates inflammatory signaling and immunity, mitogenic kinase signaling, and cell proliferation, as well as cell invasion and metastasis. Acts as an E3 ubiquitin-protein ligase regulating NF-kappa-B signaling and regulates both canonical and non-canonical NF-kappa-B signaling by acting in opposite directions: acts as a positive regulator of the canonical pathway and suppresses constitutive activation of non-canonical NF-kappa-B signaling. The target proteins for its E3 ubiquitin-protein ligase activity include: RIPK1, RIPK2, RIPK3, RIPK4, CASP3, CASP7, CASP8, TRAF2, DIABLO/SMAC, MAP3K14/NIK, MAP3K5/ASK1, IKBKG/NEMO, IKBKE and MXD1/MAD1. Can also function as an E3 ubiquitin-protein ligase of the NEDD8 conjugation pathway, targeting effector caspases for neddylation and inactivation. Acts as an important regulator of innate immune signaling via regulation of Toll-like receptors (TLRs), Nodlike receptors (NLRs) and RIG-I like receptors (RLRs), collectively referred to as pattern recognition receptors (PRRs). Protects cells from spontaneous formation of the ripoptosome, a large multi-protein complex that has the capability to kill cancer cells in a caspase-dependent and caspase-independent manner. Suppresses ripoptosome formation by ubiquitinating RIPK1 and CASP8. Can stimulate the transcriptional activity of E2F1. Plays a role in the modulation of the cell cycle. This Homo sapiens (Human) protein is Baculoviral IAP repeat-containing protein 2 (BIRC2).